The following is a 70-amino-acid chain: Phycocyanin-645 alpha-2 chain (70 aa).

Residue Arg16 coordinates (2R,3E)-phycocyanobilin. Cys18, Tyr26, and Lys41 together coordinate mesobiliverdin.

This sequence belongs to the phycoerythrin family. In terms of assembly, heterotetramer of 2 different alpha chains and 2 identical beta chains which form 2 alpha-beta heterodimers within the heterotetramer. Post-translationally, contains one phycocyanobilin chromophore, one mesobiliverdin chromophore and one 15,16-dihydrobiliverdin chromophore with binding mediated by both the alpha and beta subunits.

The protein localises to the plastid. It localises to the chloroplast thylakoid membrane. Functionally, light-harvesting photosynthetic tetrapyrrole chromophore-protein from the phycobiliprotein complex. The chain is Phycocyanin-645 alpha-2 chain from Chroomonas sp.